Here is a 141-residue protein sequence, read N- to C-terminus: Hemoglobin subunit alpha (141 aa).

Residues 1–141 (VLSAKDKTNI…VSTVLTSKYR (141 aa)) form the Globin domain. Serine 3 is subject to Phosphoserine. At lysine 7 the chain carries N6-succinyllysine. A Phosphothreonine modification is found at threonine 8. Residue lysine 16 is modified to N6-acetyllysine; alternate. Lysine 16 carries the post-translational modification N6-succinyllysine; alternate. Tyrosine 24 is subject to Phosphotyrosine. Lysine 40 is modified (N6-succinyllysine). Serine 49 bears the Phosphoserine mark. An O2-binding site is contributed by histidine 58. Histidine 87 lines the heme b pocket. The residue at position 102 (serine 102) is a Phosphoserine. Threonine 108 is subject to Phosphothreonine. Residues serine 124 and serine 131 each carry the phosphoserine modification. Threonine 134 and threonine 137 each carry phosphothreonine. Residue serine 138 is modified to Phosphoserine.

The protein belongs to the globin family. In terms of assembly, heterotetramer of two alpha chains and two beta chains. Red blood cells.

Functionally, involved in oxygen transport from the lung to the various peripheral tissues. In terms of biological role, hemopressin acts as an antagonist peptide of the cannabinoid receptor CNR1. Hemopressin-binding efficiently blocks cannabinoid receptor CNR1 and subsequent signaling. The chain is Hemoglobin subunit alpha (HBA) from Mesocricetus auratus (Golden hamster).